A 3268-amino-acid chain; its full sequence is E3 ubiquitin-protein ligase TOM1 (3268 aa).

Ser1890 carries the phosphoserine modification. Disordered stretches follow at residues 1941-2023 (VFSD…EDDA) and 2038-2083 (GYDV…MGDS). The span at 1942 to 1955 (FSDEDDDMGEEDAD) shows a compositional bias: acidic residues. The span at 1967–1976 (SSEMQSSTAD) shows a compositional bias: polar residues. Composition is skewed to acidic residues over residues 1978 to 1988 (TDVDYEVDDAD), 2042 to 2053 (DLSDYDVDESDW), and 2063 to 2074 (SDEDSESSEDEP). Position 2096 is a phosphothreonine (Thr2096). Phosphoserine is present on residues Ser2119, Ser2376, Ser2406, and Ser2418. Residues 2416–2426 (DVSNNDEEVEN) show a composition bias toward acidic residues. A disordered region spans residues 2416–2443 (DVSNNDEEVENGLDHGNSNDRNNADPEK). The HECT domain occupies 2932 to 3268 (TNDEIKNSKL…NEGHEGFGLA (337 aa)). Residue Cys3235 is the Glycyl thioester intermediate of the active site.

Belongs to the UPL family. TOM1/PTR1 subfamily. As to quaternary structure, interacts with the ADA3/NGG1 subunit of the SAGA complex. Interacts with KRR1.

The protein resides in the nucleus. The protein localises to the nucleolus. It catalyses the reaction S-ubiquitinyl-[E2 ubiquitin-conjugating enzyme]-L-cysteine + [acceptor protein]-L-lysine = [E2 ubiquitin-conjugating enzyme]-L-cysteine + N(6)-ubiquitinyl-[acceptor protein]-L-lysine.. It participates in protein modification; protein ubiquitination. Its function is as follows. Probable ubiquitin ligase protein involved in many cellular processes, such as transcription regulation, maintenance of nuclear structure, cell cycle, mRNA export and rRNA maturation. E3 ubiquitin ligase proteins mediate ubiquitination and subsequent proteasomal degradation of target proteins. Involved in transcription regulation by interacting, and probably mediating, ubiquitination of some subunit of the SAGA complex. Required for SPT7 ubiquitination. Participates in mRNA export from the nucleus by regulating the transport of hnRNP proteins. Required for the shuttling of hnRNP protein NAB2, probably by mediating ubiquitination of a protein associated with NAB2. Also required for full induction of the general stress and heat-shock responses. Involved in 18S rRNA maturation by affecting several early steps in the rRNA processing pathway. This is E3 ubiquitin-protein ligase TOM1 (TOM1) from Saccharomyces cerevisiae (strain ATCC 204508 / S288c) (Baker's yeast).